The chain runs to 731 residues: 1,4-alpha-glucan branching enzyme GlgB (731 aa).

Catalysis depends on Asp409, which acts as the Nucleophile. Catalysis depends on Glu462, which acts as the Proton donor.

This sequence belongs to the glycosyl hydrolase 13 family. GlgB subfamily. As to quaternary structure, monomer.

The catalysed reaction is Transfers a segment of a (1-&gt;4)-alpha-D-glucan chain to a primary hydroxy group in a similar glucan chain.. Its pathway is glycan biosynthesis; glycogen biosynthesis. Its function is as follows. Catalyzes the formation of the alpha-1,6-glucosidic linkages in glycogen by scission of a 1,4-alpha-linked oligosaccharide from growing alpha-1,4-glucan chains and the subsequent attachment of the oligosaccharide to the alpha-1,6 position. This is 1,4-alpha-glucan branching enzyme GlgB (glgB) from Dickeya chrysanthemi (Pectobacterium chrysanthemi).